We begin with the raw amino-acid sequence, 665 residues long: Macrolide export ATP-binding/permease protein MacB (665 aa).

The 239-residue stretch at Met-17–Lys-255 folds into the ABC transporter domain. Residue Gly-53–Ser-60 coordinates ATP. Helical transmembrane passes span Leu-287–Gly-307, Ile-544–Val-564, Phe-588–Phe-608, and Ser-630–Ala-650.

Belongs to the ABC transporter superfamily. Macrolide exporter (TC 3.A.1.122) family. In terms of assembly, homodimer. Part of the tripartite efflux system MacAB-TolC, which is composed of an inner membrane transporter, MacB, a periplasmic membrane fusion protein, MacA, and an outer membrane component, TolC. The complex forms a large protein conduit and can translocate molecules across both the inner and outer membranes. Interacts with MacA.

The protein localises to the cell inner membrane. Part of the tripartite efflux system MacAB-TolC. MacB is a non-canonical ABC transporter that contains transmembrane domains (TMD), which form a pore in the inner membrane, and an ATP-binding domain (NBD), which is responsible for energy generation. Confers resistance against macrolides. The protein is Macrolide export ATP-binding/permease protein MacB of Psychrobacter cryohalolentis (strain ATCC BAA-1226 / DSM 17306 / VKM B-2378 / K5).